The chain runs to 92 residues: Small ribosomal subunit protein uS19 (92 aa).

This sequence belongs to the universal ribosomal protein uS19 family.

Functionally, protein S19 forms a complex with S13 that binds strongly to the 16S ribosomal RNA. The sequence is that of Small ribosomal subunit protein uS19 from Bartonella henselae (strain ATCC 49882 / DSM 28221 / CCUG 30454 / Houston 1) (Rochalimaea henselae).